A 659-amino-acid polypeptide reads, in one-letter code: UvrABC system protein B (659 aa).

The Helicase ATP-binding domain maps to 25–414 (EGVRRGAREQ…PSLVVEQIVR (390 aa)). An ATP-binding site is contributed by 38–45 (GATGTGKT). The Beta-hairpin signature appears at 91–114 (YYDYYQPEAYIPTTDTYIEKDALI). One can recognise a Helicase C-terminal domain in the interval 431-597 (QIDDLYAEIR…TIVKPVRDVI (167 aa)). One can recognise a UVR domain in the interval 620–655 (PKVVAKLRKEMMQAAKDLDFERAAEIRDIIFELEKK).

This sequence belongs to the UvrB family. In terms of assembly, forms a heterotetramer with UvrA during the search for lesions. Interacts with UvrC in an incision complex.

It is found in the cytoplasm. Its function is as follows. The UvrABC repair system catalyzes the recognition and processing of DNA lesions. A damage recognition complex composed of 2 UvrA and 2 UvrB subunits scans DNA for abnormalities. Upon binding of the UvrA(2)B(2) complex to a putative damaged site, the DNA wraps around one UvrB monomer. DNA wrap is dependent on ATP binding by UvrB and probably causes local melting of the DNA helix, facilitating insertion of UvrB beta-hairpin between the DNA strands. Then UvrB probes one DNA strand for the presence of a lesion. If a lesion is found the UvrA subunits dissociate and the UvrB-DNA preincision complex is formed. This complex is subsequently bound by UvrC and the second UvrB is released. If no lesion is found, the DNA wraps around the other UvrB subunit that will check the other stand for damage. This is UvrABC system protein B from Symbiobacterium thermophilum (strain DSM 24528 / JCM 14929 / IAM 14863 / T).